Reading from the N-terminus, the 119-residue chain is Protein TusC (119 aa).

It belongs to the DsrF/TusC family. As to quaternary structure, heterohexamer, formed by a dimer of trimers. The hexameric TusBCD complex contains 2 copies each of TusB, TusC and TusD. The TusBCD complex interacts with TusE.

Its subcellular location is the cytoplasm. Its function is as follows. Part of a sulfur-relay system required for 2-thiolation of 5-methylaminomethyl-2-thiouridine (mnm(5)s(2)U) at tRNA wobble positions. The polypeptide is Protein TusC (Buchnera aphidicola subsp. Acyrthosiphon pisum (strain 5A)).